The chain runs to 408 residues: (R)-2-hydroxyisocaproyl-CoA dehydratase alpha subunit (408 aa).

Glu-55 serves as a coordination point for substrate. Residues Cys-84, Cys-117, and Cys-346 each contribute to the [4Fe-4S] cluster site.

It belongs to the FldB/FldC dehydratase alpha/beta subunit family. Part of the heterodimeric complex HadBC composed of (R)-2-hydroxyisocaproyl-CoA dehydratase alpha (HadB) and beta (HadC) subunit. Requires [4Fe-4S] cluster as cofactor.

It catalyses the reaction (R)-2-hydroxy-4-methylpentanoyl-CoA = 4-methylpent-2-enoyl-CoA + H2O. With respect to regulation, activated by HadI. In terms of biological role, involved in the reductive branch of L-leucine fermentation. Catalyzes the irreversible beta/alpha-elimination of water from (R)-2-hydroxyisocaproyl-CoA to yield isocaprenoyl-CoA. This beta/alpha-dehydration depends on the reductive formation of ketyl radicals on the substrate generated by injection of a single electron from the ATP-dependent activator protein HadI. The enzyme is specific for the R-isomer. The polypeptide is (R)-2-hydroxyisocaproyl-CoA dehydratase alpha subunit (Clostridioides difficile (Peptoclostridium difficile)).